The sequence spans 583 residues: Multidrug transporter QDR2 (583 aa).

Positions Glu-23 to Glu-46 are disordered. The N-linked (GlcNAc...) asparagine glycan is linked to Asn-60. The helical transmembrane segment at Ala-88–Ile-108 threads the bilayer. Asn-120 carries an N-linked (GlcNAc...) asparagine glycan. Helical transmembrane passes span Ile-121–Ala-141, Pro-148–Gln-168, Cys-178–Val-198, Val-208–Gly-228, and Ile-238–Pro-258. Asn-267 carries N-linked (GlcNAc...) asparagine glycosylation. Helical transmembrane passes span Ile-323–Leu-342 and Val-354–Thr-374. An N-linked (GlcNAc...) asparagine glycan is attached at Asn-380. A run of 4 helical transmembrane segments spans residues His-432–Ile-452, Leu-458–Phe-478, Thr-493–Leu-513, and Gly-524–Leu-544.

The protein belongs to the major facilitator superfamily. CAR1 family.

It localises to the cell membrane. Its function is as follows. Multidrug resistance transporter involved in resistance to the antifungal drugs miconazole, tioconazole, clotrimazole, and ketoconazole; as well as to quinidine. Decreases the intracellular accumulation of clotrimazole in and plays a role in the extrusion of this antifungal from preloaded cells. The chain is Multidrug transporter QDR2 from Candida glabrata (strain ATCC 2001 / BCRC 20586 / JCM 3761 / NBRC 0622 / NRRL Y-65 / CBS 138) (Yeast).